The chain runs to 485 residues: Putative ATP-dependent RNA helicase ste13 (485 aa).

The interval 16-38 is disordered; the sequence is DRESFKGQMKAQPVDMRPKTEDV. Positions 44–72 match the Q motif motif; that stretch reads TEFEDYYLKRELLMGIFEAGFERPSPIQE. A Helicase ATP-binding domain is found at 75–245; sequence IPIALSGRDI…DKHLNKPYEI (171 aa). ATP is bound at residue 88–95; sequence AKNGTGKT. Positions 193–196 match the DEAD box motif; that stretch reads DEAD. A Helicase C-terminal domain is found at 255–415; the sequence is GVTQYYAFVD…PIPPSIDPSL (161 aa). Positions 437–485 are disordered; that stretch reads LAAQQAKGQEGYHNRPNNNRGGHPRGGGNRGGYRQSNRQPRYRGQQKAD.

The protein belongs to the DEAD box helicase family. DDX6/DHH1 subfamily.

The protein localises to the cytoplasm. It localises to the P-body. It catalyses the reaction ATP + H2O = ADP + phosphate + H(+). Its function is as follows. ATP-dependent RNA helicase involved in mRNA turnover, and more specifically in mRNA decapping. Is involved in G1/S DNA-damage checkpoint recovery, probably through the regulation of the translational status of a subset of mRNAs. May also have a role in translation and mRNA nuclear export. The protein is Putative ATP-dependent RNA helicase ste13 (ste13) of Schizosaccharomyces pombe (strain 972 / ATCC 24843) (Fission yeast).